The sequence spans 92 residues: DNA-directed RNA polymerase subunit omega (92 aa).

The protein belongs to the RNA polymerase subunit omega family. The RNAP catalytic core consists of 2 alpha, 1 beta, 1 beta' and 1 omega subunit. When a sigma factor is associated with the core the holoenzyme is formed, which can initiate transcription.

It catalyses the reaction RNA(n) + a ribonucleoside 5'-triphosphate = RNA(n+1) + diphosphate. Promotes RNA polymerase assembly. Latches the N- and C-terminal regions of the beta' subunit thereby facilitating its interaction with the beta and alpha subunits. The polypeptide is DNA-directed RNA polymerase subunit omega (Acinetobacter baumannii (strain AB307-0294)).